Consider the following 287-residue polypeptide: MVLSNVKIFRLKSHRAFRIGPMIKAVAGNLLVKRFYQPKLERIPPASLLLKQKIRLAQNGSTTSTENPISFSQTMSEIFSVLQPSAPDLDEDETSGLKRDHLLTERLNNGELGVIMNKFFNPSSTHNNQLIDTNILLQNFPKLSGNDLDLLDFAINEKMRGNWNDLKQDFIQLWYYKSFGFLGPRTQFVLTNSSPSVRSQFLKLPFIEYNWFLLQNNKNANILPADVQNVVKVFHLDDKRFTWKSIDPFSKAIISFVVFVSIYVWLDESAKQKTKELPAQKSTVISE.

The transit peptide at 1–24 directs the protein to the mitochondrion; that stretch reads MVLSNVKIFRLKSHRAFRIGPMIK. A helical transmembrane segment spans residues 250 to 266; sequence SKAIISFVVFVSIYVWL.

This sequence belongs to the GEP7 family.

The protein localises to the mitochondrion membrane. Its function is as follows. Involved in respiratory growth and required for cell survival in the absence of prohibitins or GEM1. The sequence is that of Genetic interactor of prohibitin 7, mitochondrial (GEP7) from Saccharomyces cerevisiae (strain ATCC 204508 / S288c) (Baker's yeast).